The chain runs to 266 residues: Putative carbamate hydrolase RutD (266 aa).

Belongs to the AB hydrolase superfamily. Hydrolase RutD family.

The enzyme catalyses carbamate + 2 H(+) = NH4(+) + CO2. Its function is as follows. Involved in pyrimidine catabolism. May facilitate the hydrolysis of carbamate, a reaction that can also occur spontaneously. The chain is Putative carbamate hydrolase RutD from Escherichia coli O150:H5 (strain SE15).